We begin with the raw amino-acid sequence, 251 residues long: Phosphate import ATP-binding protein PstB (251 aa).

The ABC transporter domain maps to 5–246; sequence IEIENFSAYY…PKNRLTEEYL (242 aa). 37–44 serves as a coordination point for ATP; the sequence is GPSGCGKT.

The protein belongs to the ABC transporter superfamily. Phosphate importer (TC 3.A.1.7) family. In terms of assembly, the complex is composed of two ATP-binding proteins (PstB), two transmembrane proteins (PstC and PstA) and a solute-binding protein (PstS).

Its subcellular location is the cell inner membrane. The catalysed reaction is phosphate(out) + ATP + H2O = ADP + 2 phosphate(in) + H(+). Functionally, part of the ABC transporter complex PstSACB involved in phosphate import. Responsible for energy coupling to the transport system. The protein is Phosphate import ATP-binding protein PstB of Thermotoga maritima (strain ATCC 43589 / DSM 3109 / JCM 10099 / NBRC 100826 / MSB8).